A 123-amino-acid chain; its full sequence is uncharacterized protein (123 aa).

An N-terminal signal peptide occupies residues 1 to 19 (MKIKYFFIPLFSSAILFSA). Cysteine 20 is lipidated: N-palmitoyl cysteine. Cysteine 20 is lipidated: S-diacylglycerol cysteine.

The protein belongs to the MG439/MG440 family.

It localises to the cell membrane. This is an uncharacterized protein from Mycoplasma pneumoniae (strain ATCC 29342 / M129 / Subtype 1) (Mycoplasmoides pneumoniae).